Consider the following 359-residue polypeptide: uncharacterized protein (359 aa).

Residues 163-275 (VVDTSCIIDG…SKVANLQKVQ (113 aa)) enclose the PINc domain. Positions 165 and 244 each coordinate Mg(2+). In terms of domain architecture, TRAM spans 289-350 (IYLPGDSLEL…LQTSAGRMIF (62 aa)).

Belongs to the ycf81 family. It in the central section; belongs to the PINc/VapC protein family. Mg(2+) is required as a cofactor.

In terms of biological role, an RNase. This is an uncharacterized protein from Synechocystis sp. (strain ATCC 27184 / PCC 6803 / Kazusa).